Consider the following 744-residue polypeptide: MTIPNTIPITPELIASHGLKPDEYQRILDLIGREPTFTELGIFSAMWNEHCSYKSSKKWLRTLPTKGPRVIQGPGENAGVVDIDDGDCVVFKMESHNHPSYIEPYQGAATGVGGILRDVFTMGARPIAAMNALRFGEPDHPKTRHLVSGVVSGVGGYGNSFGVPTVGGEVEFDARYNGNILVNAFAAGIAKSNAIFLSEAKGVGLPVVYLGAKTGRDGVGGATMASAEFDESIEEKRPTVQVGDPFTEKCLLEACLELMQTGAVIAIQDMGAAGLTCSAVEMGAKGDLGILLELDKVPVREERMTAYEMMLSESQERMLMVLQPEKEEEAKAIFVKWGLDFAIVGWTTDDLRFRVMHQGEEVANLPIKDLGDQAPEYDRPWRESGKRAPLPANLVAAPEDYGQALLQLVGSANQSSRRWVYEQYDTLIQGNSLQLPGGDAGVVRVDGHPSKALAFSSDVTPRYVEADPFEGGKQAVAECWRNITATGAEPLAATDNLNFGNPEKPEIMGQFVEAVKGIGEACRALDFPIVSGNVSLYNETNGVAILPTPTIAGVGLLPDWSKMARIGSANDGDKVIMIGVDGSHLGQSVYLRDVLSSSEGPAPEVDLFAERRNGDFVRSVIRNGQATACHDISSGGLAVALAEMAMASGKGLTIDLSEGKGEPHALLFGEDQARYVLTLPADVADFVCVNAEGGGVPFRRLGTVGGTALVVGDLISLPIQQLRDAHESWFPDFMEGRGELAAAE.

The active site involves histidine 50. Tyrosine 53 and lysine 92 together coordinate ATP. Residue glutamate 94 coordinates Mg(2+). Substrate-binding positions include 95–98 and arginine 117; that span reads SHNH. The active-site Proton acceptor is the histidine 96. Residue aspartate 118 coordinates Mg(2+). Glutamine 241 serves as a coordination point for substrate. Aspartate 269 contacts Mg(2+). Residue 313–315 participates in substrate binding; that stretch reads ESQ. The ATP site is built by aspartate 495 and glycine 532. Position 533 (asparagine 533) interacts with Mg(2+). Serine 535 serves as a coordination point for substrate.

This sequence belongs to the FGAMS family. Monomer. Part of the FGAM synthase complex composed of 1 PurL, 1 PurQ and 2 PurS subunits.

The protein localises to the cytoplasm. It catalyses the reaction N(2)-formyl-N(1)-(5-phospho-beta-D-ribosyl)glycinamide + L-glutamine + ATP + H2O = 2-formamido-N(1)-(5-O-phospho-beta-D-ribosyl)acetamidine + L-glutamate + ADP + phosphate + H(+). It functions in the pathway purine metabolism; IMP biosynthesis via de novo pathway; 5-amino-1-(5-phospho-D-ribosyl)imidazole from N(2)-formyl-N(1)-(5-phospho-D-ribosyl)glycinamide: step 1/2. Functionally, part of the phosphoribosylformylglycinamidine synthase complex involved in the purines biosynthetic pathway. Catalyzes the ATP-dependent conversion of formylglycinamide ribonucleotide (FGAR) and glutamine to yield formylglycinamidine ribonucleotide (FGAM) and glutamate. The FGAM synthase complex is composed of three subunits. PurQ produces an ammonia molecule by converting glutamine to glutamate. PurL transfers the ammonia molecule to FGAR to form FGAM in an ATP-dependent manner. PurS interacts with PurQ and PurL and is thought to assist in the transfer of the ammonia molecule from PurQ to PurL. The sequence is that of Phosphoribosylformylglycinamidine synthase subunit PurL from Rhizobium johnstonii (strain DSM 114642 / LMG 32736 / 3841) (Rhizobium leguminosarum bv. viciae).